The sequence spans 210 residues: Thiamine-phosphate synthase (210 aa).

4-amino-2-methyl-5-(diphosphooxymethyl)pyrimidine-binding positions include 38–42 (QLREK) and Asn70. Mg(2+) is bound by residues Asp71 and Asp90. Ser109 contacts 4-amino-2-methyl-5-(diphosphooxymethyl)pyrimidine. Position 139–141 (139–141 (TPT)) interacts with 2-[(2R,5Z)-2-carboxy-4-methylthiazol-5(2H)-ylidene]ethyl phosphate. A 4-amino-2-methyl-5-(diphosphooxymethyl)pyrimidine-binding site is contributed by Lys142. 2-[(2R,5Z)-2-carboxy-4-methylthiazol-5(2H)-ylidene]ethyl phosphate-binding positions include Gly170 and 190–191 (VS).

The protein belongs to the thiamine-phosphate synthase family. It depends on Mg(2+) as a cofactor.

It catalyses the reaction 2-[(2R,5Z)-2-carboxy-4-methylthiazol-5(2H)-ylidene]ethyl phosphate + 4-amino-2-methyl-5-(diphosphooxymethyl)pyrimidine + 2 H(+) = thiamine phosphate + CO2 + diphosphate. It carries out the reaction 2-(2-carboxy-4-methylthiazol-5-yl)ethyl phosphate + 4-amino-2-methyl-5-(diphosphooxymethyl)pyrimidine + 2 H(+) = thiamine phosphate + CO2 + diphosphate. The catalysed reaction is 4-methyl-5-(2-phosphooxyethyl)-thiazole + 4-amino-2-methyl-5-(diphosphooxymethyl)pyrimidine + H(+) = thiamine phosphate + diphosphate. It functions in the pathway cofactor biosynthesis; thiamine diphosphate biosynthesis; thiamine phosphate from 4-amino-2-methyl-5-diphosphomethylpyrimidine and 4-methyl-5-(2-phosphoethyl)-thiazole: step 1/1. In terms of biological role, condenses 4-methyl-5-(beta-hydroxyethyl)thiazole monophosphate (THZ-P) and 2-methyl-4-amino-5-hydroxymethyl pyrimidine pyrophosphate (HMP-PP) to form thiamine monophosphate (TMP). This Leptospira biflexa serovar Patoc (strain Patoc 1 / Ames) protein is Thiamine-phosphate synthase.